The primary structure comprises 442 residues: Tubby-related protein 3 (442 aa).

The interval 23 to 68 is required for association with the IFT complex A (IFT-A); it reads MRQAKLDYQRLLLEKRQRKKRLEPFMVQPNPEARLRRAKPRASDEQ. A disordered region spans residues 101 to 177; it reads PSVSSSVVEE…TSGSATAAQP (77 aa). Residues 145 to 162 show a composition bias toward polar residues; the sequence is GISQSACLERPNSASSQN. Low complexity predominate over residues 163 to 175; it reads STDTGTSGSATAA.

Belongs to the TUB family. Associates with the IFT complex A (IFT-A). Interacts with SIRT1. As to expression, expressed at high levels in testis, ovaries, thyroid, and spinal cord.

Its subcellular location is the nucleus. It is found in the cell membrane. The protein localises to the cell projection. The protein resides in the cilium. It localises to the cytoplasm. Its subcellular location is the secreted. In terms of biological role, negative regulator of the Shh signaling transduction pathway: recruited to primary cilia via association with the IFT complex A (IFT-A) and is required for recruitment of G protein-coupled receptor GPR161 to cilia, a promoter of PKA-dependent basal repression machinery in Shh signaling. Binds to phosphorylated inositide (phosphoinositide) lipids. Both IFT-A- and phosphoinositide-binding properties are required to regulate ciliary G protein-coupled receptor trafficking. During adipogenesis, regulates ciliary trafficking of FFAR4 in preadipocytes. The polypeptide is Tubby-related protein 3 (Homo sapiens (Human)).